Here is a 279-residue protein sequence, read N- to C-terminus: Large ribosomal subunit protein uL5c (279 aa).

Disordered stretches follow at residues 1–23 (MAAT…TASS) and 40–63 (LRVA…SPSG). Residues 1–43 (MAATAVTLPSSPAPFPVTTTASSSRNVRLLLRSPPPRRALRVA) constitute a chloroplast transit peptide. The span at 41–50 (RVAASAAADA) shows a compositional bias: low complexity. Residues 51-60 (PPKPAPPPTS) show a composition bias toward pro residues.

This sequence belongs to the universal ribosomal protein uL5 family. Part of the 50S ribosomal subunit; contacts the 5S rRNA.

The protein localises to the plastid. It is found in the chloroplast. Functionally, binds 5S rRNA, forms part of the central protuberance of the 50S subunit. This Oryza sativa subsp. japonica (Rice) protein is Large ribosomal subunit protein uL5c (RPL5).